We begin with the raw amino-acid sequence, 352 residues long: Putative [LysW]-L-2-aminoadipate/[LysW]-L-glutamate phosphate reductase (352 aa).

NADP(+) is bound by residues 10 to 13 (SGFT) and 34 to 36 (SRR). C151 is an active-site residue. Residue N319 participates in NADP(+) binding.

The protein belongs to the NAGSA dehydrogenase family. Type 1 subfamily. LysY sub-subfamily.

It is found in the cytoplasm. The catalysed reaction is [amino-group carrier protein]-C-terminal-N-(1-carboxy-5-oxopentan-1-yl)-L-glutamine + phosphate + NADP(+) = [amino-group carrier protein]-C-terminal-N-(1-carboxy-5-phosphooxy-5-oxopentan-1-yl)-L-glutamine + NADPH + H(+). It catalyses the reaction [amino-group carrier protein]-C-terminal-gamma-(L-glutamyl-5-semialdehyde)-L-glutamate + phosphate + NADP(+) = [amino-group carrier protein]-C-terminal-gamma-(5-phospho-L-glutamyl)-L-glutamate + NADPH + H(+). It participates in amino-acid biosynthesis; L-lysine biosynthesis via AAA pathway; L-lysine from L-alpha-aminoadipate (Thermus route): step 3/5. It functions in the pathway amino-acid biosynthesis; L-arginine biosynthesis. In terms of biological role, involved in both the arginine and lysine biosynthetic pathways. This is Putative [LysW]-L-2-aminoadipate/[LysW]-L-glutamate phosphate reductase from Pyrobaculum islandicum (strain DSM 4184 / JCM 9189 / GEO3).